Reading from the N-terminus, the 72-residue chain is Translation initiation factor IF-1 (72 aa).

One can recognise an S1-like domain in the interval Met1–Lys72.

The protein belongs to the IF-1 family. As to quaternary structure, component of the 30S ribosomal translation pre-initiation complex which assembles on the 30S ribosome in the order IF-2 and IF-3, IF-1 and N-formylmethionyl-tRNA(fMet); mRNA recruitment can occur at any time during PIC assembly.

The protein resides in the cytoplasm. In terms of biological role, one of the essential components for the initiation of protein synthesis. Stabilizes the binding of IF-2 and IF-3 on the 30S subunit to which N-formylmethionyl-tRNA(fMet) subsequently binds. Helps modulate mRNA selection, yielding the 30S pre-initiation complex (PIC). Upon addition of the 50S ribosomal subunit IF-1, IF-2 and IF-3 are released leaving the mature 70S translation initiation complex. This Leptospira borgpetersenii serovar Hardjo-bovis (strain L550) protein is Translation initiation factor IF-1.